Here is a 337-residue protein sequence, read N- to C-terminus: tRNA N6-adenosine threonylcarbamoyltransferase (337 aa).

The Fe cation site is built by His111 and His115. Substrate-binding positions include 134 to 138 (LVSGG), Asp167, Gly180, and Asn272. Asp300 lines the Fe cation pocket.

The protein belongs to the KAE1 / TsaD family. Requires Fe(2+) as cofactor.

It is found in the cytoplasm. It catalyses the reaction L-threonylcarbamoyladenylate + adenosine(37) in tRNA = N(6)-L-threonylcarbamoyladenosine(37) in tRNA + AMP + H(+). In terms of biological role, required for the formation of a threonylcarbamoyl group on adenosine at position 37 (t(6)A37) in tRNAs that read codons beginning with adenine. Is involved in the transfer of the threonylcarbamoyl moiety of threonylcarbamoyl-AMP (TC-AMP) to the N6 group of A37, together with TsaE and TsaB. TsaD likely plays a direct catalytic role in this reaction. The chain is tRNA N6-adenosine threonylcarbamoyltransferase from Shewanella sediminis (strain HAW-EB3).